We begin with the raw amino-acid sequence, 267 residues long: GTP cyclohydrolase FolE2 (267 aa).

This sequence belongs to the GTP cyclohydrolase IV family.

The catalysed reaction is GTP + H2O = 7,8-dihydroneopterin 3'-triphosphate + formate + H(+). It functions in the pathway cofactor biosynthesis; 7,8-dihydroneopterin triphosphate biosynthesis; 7,8-dihydroneopterin triphosphate from GTP: step 1/1. Its function is as follows. Converts GTP to 7,8-dihydroneopterin triphosphate. The polypeptide is GTP cyclohydrolase FolE2 (Nitrosomonas eutropha (strain DSM 101675 / C91 / Nm57)).